The chain runs to 369 residues: 4-hydroxy-3-methylbut-2-en-1-yl diphosphate synthase (flavodoxin) (369 aa).

[4Fe-4S] cluster contacts are provided by C270, C273, C305, and E312.

It belongs to the IspG family. It depends on [4Fe-4S] cluster as a cofactor.

It catalyses the reaction (2E)-4-hydroxy-3-methylbut-2-enyl diphosphate + oxidized [flavodoxin] + H2O + 2 H(+) = 2-C-methyl-D-erythritol 2,4-cyclic diphosphate + reduced [flavodoxin]. Its pathway is isoprenoid biosynthesis; isopentenyl diphosphate biosynthesis via DXP pathway; isopentenyl diphosphate from 1-deoxy-D-xylulose 5-phosphate: step 5/6. Its function is as follows. Converts 2C-methyl-D-erythritol 2,4-cyclodiphosphate (ME-2,4cPP) into 1-hydroxy-2-methyl-2-(E)-butenyl 4-diphosphate. This Pseudomonas savastanoi pv. phaseolicola (strain 1448A / Race 6) (Pseudomonas syringae pv. phaseolicola (strain 1448A / Race 6)) protein is 4-hydroxy-3-methylbut-2-en-1-yl diphosphate synthase (flavodoxin).